The chain runs to 481 residues: Glutamyl-tRNA(Gln) amidotransferase subunit A (481 aa).

Catalysis depends on charge relay system residues lysine 76 and serine 151. Serine 175 (acyl-ester intermediate) is an active-site residue.

Belongs to the amidase family. GatA subfamily. In terms of assembly, heterotrimer of A, B and C subunits.

The enzyme catalyses L-glutamyl-tRNA(Gln) + L-glutamine + ATP + H2O = L-glutaminyl-tRNA(Gln) + L-glutamate + ADP + phosphate + H(+). Functionally, allows the formation of correctly charged Gln-tRNA(Gln) through the transamidation of misacylated Glu-tRNA(Gln) in organisms which lack glutaminyl-tRNA synthetase. The reaction takes place in the presence of glutamine and ATP through an activated gamma-phospho-Glu-tRNA(Gln). The chain is Glutamyl-tRNA(Gln) amidotransferase subunit A from Chlorobaculum tepidum (strain ATCC 49652 / DSM 12025 / NBRC 103806 / TLS) (Chlorobium tepidum).